The chain runs to 71 residues: Kunitz-type serine protease inhibitor HNTX-852 (71 aa).

The N-terminal stretch at 1-22 is a signal peptide; sequence DPSGSPHIRILPQETFEDICRL. Disulfide bonds link Cys-20–Cys-68 and Cys-43–Cys-64. The BPTI/Kunitz inhibitor domain occupies 23-68; it reads PSDSGDCLRFFEMWYFDGTTCTKFVYGGYGGNDNRFPTEKACMKRC.

The protein belongs to the venom Kunitz-type family. 03 (sub-Kunitz) subfamily. In terms of tissue distribution, expressed by the venom gland.

The protein resides in the secreted. In terms of biological role, serine protease inhibitor that inhibits trypsin at a molar ratio of 1:1. The chain is Kunitz-type serine protease inhibitor HNTX-852 from Cyriopagopus hainanus (Chinese bird spider).